Here is a 257-residue protein sequence, read N- to C-terminus: uncharacterized protein (257 aa).

N61, N95, N102, N111, N139, N148, and N152 each carry an N-linked (GlcNAc...) asparagine; by host glycan. A helical transmembrane segment spans residues 233–253 (WYIIGGIFWVIVLIILVIFII).

The protein localises to the host membrane. It localises to the virion. This is an uncharacterized protein from Acanthamoeba polyphaga (Amoeba).